The sequence spans 474 residues: 3-isopropylmalate dehydratase large subunit (474 aa).

[4Fe-4S] cluster contacts are provided by cysteine 352, cysteine 413, and cysteine 416.

This sequence belongs to the aconitase/IPM isomerase family. LeuC type 1 subfamily. Heterodimer of LeuC and LeuD. The cofactor is [4Fe-4S] cluster.

The catalysed reaction is (2R,3S)-3-isopropylmalate = (2S)-2-isopropylmalate. The protein operates within amino-acid biosynthesis; L-leucine biosynthesis; L-leucine from 3-methyl-2-oxobutanoate: step 2/4. Functionally, catalyzes the isomerization between 2-isopropylmalate and 3-isopropylmalate, via the formation of 2-isopropylmaleate. In Pseudomonas savastanoi pv. phaseolicola (strain 1448A / Race 6) (Pseudomonas syringae pv. phaseolicola (strain 1448A / Race 6)), this protein is 3-isopropylmalate dehydratase large subunit.